The following is a 520-amino-acid chain: Sterile alpha motif domain-containing protein 3 (520 aa).

The SAM domain maps to 4–71 (WSVDQVCKWL…KYKQGNQELK (68 aa)). Residues 67–104 (NQELKPTGGPADTSTLTPAQAAPEHEQNPSPTSHGDQT) form a disordered region. The segment covering 94–104 (NPSPTSHGDQT) has biased composition (polar residues).

The chain is Sterile alpha motif domain-containing protein 3 (Samd3) from Mus musculus (Mouse).